We begin with the raw amino-acid sequence, 226 residues long: MPKGIIGKKIGMTKVFVNGKAIPVTVIQAGPCYVAYTRTQEKDGYNAVALTFGERKEKNIPKPLLAIFKKANIKPAKVIKEFPLKDGETVEPGQEIRIENVFEKGDLVDITGKSKGRGFTSVMKRWDFAGFPKSHGHRYHRAVGSIGCRTEPGRVWKTKRMAGHYGNETVTVLGLEVVDIIPEKNVILVKGSVPGAPNSTVFLKQSVIADRRKGKLKLAKSKAMYA.

Belongs to the universal ribosomal protein uL3 family. Part of the 50S ribosomal subunit. Forms a cluster with proteins L14 and L19.

Its function is as follows. One of the primary rRNA binding proteins, it binds directly near the 3'-end of the 23S rRNA, where it nucleates assembly of the 50S subunit. The protein is Large ribosomal subunit protein uL3 of Sulfurihydrogenibium sp. (strain YO3AOP1).